The following is a 318-amino-acid chain: Homoserine kinase (318 aa).

ATP is bound at residue Pro-97 to Cys-107.

Belongs to the GHMP kinase family. Homoserine kinase subfamily.

The protein resides in the cytoplasm. The enzyme catalyses L-homoserine + ATP = O-phospho-L-homoserine + ADP + H(+). Its pathway is amino-acid biosynthesis; L-threonine biosynthesis; L-threonine from L-aspartate: step 4/5. Its function is as follows. Catalyzes the ATP-dependent phosphorylation of L-homoserine to L-homoserine phosphate. The sequence is that of Homoserine kinase from Vibrio cholerae serotype O1 (strain M66-2).